The sequence spans 254 residues: Flavin-dependent thymidylate synthase (254 aa).

The region spanning 7–237 (LRVQLIAKTE…PAVFADFEIT (231 aa)) is the ThyX domain. Residues 92–95 (ELIR), 103–107 (QLSQR), and His-176 each bind dUMP. FAD contacts are provided by residues 95-97 (RHR) and Gln-103. A ThyX motif motif is present at residues 95 to 105 (RHRHFSYSQLS). FAD is bound by residues 192–194 (NYR) and His-198. Residue Arg-203 coordinates dUMP. Arg-203 functions as the Involved in ionization of N3 of dUMP, leading to its activation in the catalytic mechanism.

This sequence belongs to the thymidylate synthase ThyX family. Homotetramer. The cofactor is FAD.

It catalyses the reaction dUMP + (6R)-5,10-methylene-5,6,7,8-tetrahydrofolate + NADPH + H(+) = dTMP + (6S)-5,6,7,8-tetrahydrofolate + NADP(+). It participates in pyrimidine metabolism; dTTP biosynthesis. Catalyzes the reductive methylation of 2'-deoxyuridine-5'-monophosphate (dUMP) to 2'-deoxythymidine-5'-monophosphate (dTMP) while utilizing 5,10-methylenetetrahydrofolate (mTHF) as the methyl donor, and NADPH and FADH(2) as the reductant. The polypeptide is Flavin-dependent thymidylate synthase (Mycobacterium leprae (strain Br4923)).